Reading from the N-terminus, the 1342-residue chain is DNA-directed RNA polymerase subunit beta (1342 aa).

Belongs to the RNA polymerase beta chain family. As to quaternary structure, the RNAP catalytic core consists of 2 alpha, 1 beta, 1 beta' and 1 omega subunit. When a sigma factor is associated with the core the holoenzyme is formed, which can initiate transcription.

It carries out the reaction RNA(n) + a ribonucleoside 5'-triphosphate = RNA(n+1) + diphosphate. DNA-dependent RNA polymerase catalyzes the transcription of DNA into RNA using the four ribonucleoside triphosphates as substrates. This chain is DNA-directed RNA polymerase subunit beta, found in Salmonella gallinarum (strain 287/91 / NCTC 13346).